Here is a 266-residue protein sequence, read N- to C-terminus: U2 small nuclear ribonucleoprotein A' (266 aa).

4 LRR repeats span residues 30–51 (ILRN…NHLA), 53–74 (PTHI…HHRD), 75–95 (DIET…ALLP), and 97–118 (KLKS…IPLS). An LRRCT domain is found at 132–170 (NPICHLSEYRQRILALVPSLEVLDFKLVSQAEKAQAVKD).

The protein belongs to the U2 small nuclear ribonucleoprotein A family. Associated with the spliceosome.

It is found in the nucleus. Functionally, involved in pre-mRNA splicing. The sequence is that of U2 small nuclear ribonucleoprotein A' (LEA1) from Candida glabrata (strain ATCC 2001 / BCRC 20586 / JCM 3761 / NBRC 0622 / NRRL Y-65 / CBS 138) (Yeast).